A 90-amino-acid polypeptide reads, in one-letter code: Small ribosomal subunit protein uS15 (90 aa).

It belongs to the universal ribosomal protein uS15 family. In terms of assembly, part of the 30S ribosomal subunit. Forms a bridge to the 50S subunit in the 70S ribosome, contacting the 23S rRNA.

In terms of biological role, one of the primary rRNA binding proteins, it binds directly to 16S rRNA where it helps nucleate assembly of the platform of the 30S subunit by binding and bridging several RNA helices of the 16S rRNA. Functionally, forms an intersubunit bridge (bridge B4) with the 23S rRNA of the 50S subunit in the ribosome. The polypeptide is Small ribosomal subunit protein uS15 (Wolbachia sp. subsp. Brugia malayi (strain TRS)).